A 1186-amino-acid chain; its full sequence is ATP-dependent helicase/nuclease subunit A (1186 aa).

Residues 2–460 (NFSKNQRAVI…IELSENYRSQ (459 aa)) enclose the UvrD-like helicase ATP-binding domain. Residue 23-30 (ASAGSGKT) coordinates ATP. The region spanning 487-771 (DVELKAANRD…SVMTIHAAKG (285 aa)) is the UvrD-like helicase C-terminal domain.

The protein belongs to the helicase family. AddA subfamily. In terms of assembly, heterodimer of AddA and AddB/RexB. Mg(2+) is required as a cofactor.

The enzyme catalyses Couples ATP hydrolysis with the unwinding of duplex DNA by translocating in the 3'-5' direction.. It catalyses the reaction ATP + H2O = ADP + phosphate + H(+). Its function is as follows. The heterodimer acts as both an ATP-dependent DNA helicase and an ATP-dependent, dual-direction single-stranded exonuclease. Recognizes the chi site generating a DNA molecule suitable for the initiation of homologous recombination. The AddA nuclease domain is required for chi fragment generation; this subunit has the helicase and 3' -&gt; 5' nuclease activities. The polypeptide is ATP-dependent helicase/nuclease subunit A (Oenococcus oeni (strain ATCC BAA-331 / PSU-1)).